A 101-amino-acid polypeptide reads, in one-letter code: NAD(P)H-quinone oxidoreductase subunit 4L, chloroplastic (101 aa).

Transmembrane regions (helical) follow at residues 2-22 (MLEH…YGLI), 32-52 (MCLE…SDFF), and 61-81 (IFSI…LAIV).

This sequence belongs to the complex I subunit 4L family. In terms of assembly, NDH is composed of at least 16 different subunits, 5 of which are encoded in the nucleus.

The protein resides in the plastid. It localises to the chloroplast thylakoid membrane. It carries out the reaction a plastoquinone + NADH + (n+1) H(+)(in) = a plastoquinol + NAD(+) + n H(+)(out). The enzyme catalyses a plastoquinone + NADPH + (n+1) H(+)(in) = a plastoquinol + NADP(+) + n H(+)(out). NDH shuttles electrons from NAD(P)H:plastoquinone, via FMN and iron-sulfur (Fe-S) centers, to quinones in the photosynthetic chain and possibly in a chloroplast respiratory chain. The immediate electron acceptor for the enzyme in this species is believed to be plastoquinone. Couples the redox reaction to proton translocation, and thus conserves the redox energy in a proton gradient. The sequence is that of NAD(P)H-quinone oxidoreductase subunit 4L, chloroplastic from Helianthus annuus (Common sunflower).